The following is a 318-amino-acid chain: 4-hydroxy-3-methylbut-2-enyl diphosphate reductase (318 aa).

C12 contacts [4Fe-4S] cluster. Positions 41 and 74 each coordinate (2E)-4-hydroxy-3-methylbut-2-enyl diphosphate. Dimethylallyl diphosphate contacts are provided by H41 and H74. 2 residues coordinate isopentenyl diphosphate: H41 and H74. C96 lines the [4Fe-4S] cluster pocket. Position 124 (H124) interacts with (2E)-4-hydroxy-3-methylbut-2-enyl diphosphate. H124 provides a ligand contact to dimethylallyl diphosphate. H124 provides a ligand contact to isopentenyl diphosphate. E126 serves as the catalytic Proton donor. Residue T167 coordinates (2E)-4-hydroxy-3-methylbut-2-enyl diphosphate. Residue C197 coordinates [4Fe-4S] cluster. (2E)-4-hydroxy-3-methylbut-2-enyl diphosphate is bound by residues S225, S226, N227, and S269. Dimethylallyl diphosphate contacts are provided by S225, S226, N227, and S269. Positions 225, 226, 227, and 269 each coordinate isopentenyl diphosphate.

It belongs to the IspH family. [4Fe-4S] cluster serves as cofactor.

It carries out the reaction isopentenyl diphosphate + 2 oxidized [2Fe-2S]-[ferredoxin] + H2O = (2E)-4-hydroxy-3-methylbut-2-enyl diphosphate + 2 reduced [2Fe-2S]-[ferredoxin] + 2 H(+). It catalyses the reaction dimethylallyl diphosphate + 2 oxidized [2Fe-2S]-[ferredoxin] + H2O = (2E)-4-hydroxy-3-methylbut-2-enyl diphosphate + 2 reduced [2Fe-2S]-[ferredoxin] + 2 H(+). The protein operates within isoprenoid biosynthesis; dimethylallyl diphosphate biosynthesis; dimethylallyl diphosphate from (2E)-4-hydroxy-3-methylbutenyl diphosphate: step 1/1. Its pathway is isoprenoid biosynthesis; isopentenyl diphosphate biosynthesis via DXP pathway; isopentenyl diphosphate from 1-deoxy-D-xylulose 5-phosphate: step 6/6. Its function is as follows. Catalyzes the conversion of 1-hydroxy-2-methyl-2-(E)-butenyl 4-diphosphate (HMBPP) into a mixture of isopentenyl diphosphate (IPP) and dimethylallyl diphosphate (DMAPP). Acts in the terminal step of the DOXP/MEP pathway for isoprenoid precursor biosynthesis. The chain is 4-hydroxy-3-methylbut-2-enyl diphosphate reductase from Francisella tularensis subsp. holarctica (strain LVS).